Here is a 70-residue protein sequence, read N- to C-terminus: DNA-directed RNA polymerase subunit omega (70 aa).

Belongs to the RNA polymerase subunit omega family. In terms of assembly, the RNAP catalytic core consists of 2 alpha, 1 beta, 1 beta' and 1 omega subunit. When a sigma factor is associated with the core the holoenzyme is formed, which can initiate transcription.

It catalyses the reaction RNA(n) + a ribonucleoside 5'-triphosphate = RNA(n+1) + diphosphate. Promotes RNA polymerase assembly. Latches the N- and C-terminal regions of the beta' subunit thereby facilitating its interaction with the beta and alpha subunits. The chain is DNA-directed RNA polymerase subunit omega from Bacillus cytotoxicus (strain DSM 22905 / CIP 110041 / 391-98 / NVH 391-98).